An 88-amino-acid polypeptide reads, in one-letter code: Small ribosomal subunit protein uS17 (88 aa).

The protein belongs to the universal ribosomal protein uS17 family. Part of the 30S ribosomal subunit.

One of the primary rRNA binding proteins, it binds specifically to the 5'-end of 16S ribosomal RNA. In Prochlorococcus marinus (strain MIT 9515), this protein is Small ribosomal subunit protein uS17.